The following is a 127-amino-acid chain: Large ribosomal subunit protein eL18 (127 aa).

This sequence belongs to the eukaryotic ribosomal protein eL18 family.

In Methanopyrus kandleri (strain AV19 / DSM 6324 / JCM 9639 / NBRC 100938), this protein is Large ribosomal subunit protein eL18.